The following is a 1240-amino-acid chain: ABC transporter B family member 17 (1240 aa).

An ABC transmembrane type-1 1 domain is found at 35-324 (MALGLIGAVG…SLSNLKYFSE (290 aa)). A helical membrane pass occupies residues 36–56 (ALGLIGAVGDGFITPVVVFIF). Asn-70 carries an N-linked (GlcNAc...) asparagine glycan. 5 helical membrane-spanning segments follow: residues 81–101 (VVAL…EGYC), 158–180 (LPNF…ILMW), 184–206 (IVGF…ALVS), 264–284 (GITI…TWYG), and 296–316 (GTVF…GQSL). The 237-residue stretch at 359–595 (VEFNHVKFTY…IDGQYTSLVS (237 aa)) folds into the ABC transporter 1 domain. 394-401 (GGSGSGKS) lines the ATP pocket. N-linked (GlcNAc...) asparagine glycans are attached at residues Asn-542, Asn-609, and Asn-642. An ABC transmembrane type-1 2 domain is found at 672 to 960 (ALYGCLSAAL…AGTMTTDLAR (289 aa)). 2 consecutive transmembrane segments (helical) span residues 681 to 701 (LVGV…SVFF) and 714 to 734 (IYVL…ISQH). A glycan (N-linked (GlcNAc...) asparagine) is linked at Asn-769. Helical transmembrane passes span 793-815 (MSLL…VIAW), 817-839 (LAIV…RVLL), 896-919 (WLAG…NFWY), and 923-943 (LIAD…IFVT). Residues 995 to 1233 (ITFLNVDFAY…GPTGTYFSLA (239 aa)) form the ABC transporter 2 domain. Asn-1015 carries N-linked (GlcNAc...) asparagine glycosylation. 1030-1037 (GTSGSGKS) is a binding site for ATP.

This sequence belongs to the ABC transporter superfamily. ABCB family. Multidrug resistance exporter (TC 3.A.1.201) subfamily.

The protein resides in the membrane. In Arabidopsis thaliana (Mouse-ear cress), this protein is ABC transporter B family member 17 (ABCB17).